A 312-amino-acid chain; its full sequence is MSEVDTIAKQNITRMNKLQKRLRHEVGSAIADYNMIEDGDRVMCCLSGGKDSYTMLDILLTLQQRAPIKFEIVAVNLDQKQPGFPEHVLPAYLDKLGVAYHILEKDTYSIVKEKIPEGKTTCSLCSRLRRGTLYGFAQHIGATKIALGHHRDDIIETMFLNMFYAGKQKAMPPKLLSDDGANMVIRPLAYCREKDIEEYSTLKSFPIIPCNLCGSQENLKRGAVKDMLQMWDKQHPGRIETIFTAMQNTSPSQGVDRENFDFISLKRNPDAVNTGDVADADLPAFDFVDISNNGHINLDISNRIDVVATFKP.

The PP-loop motif signature appears at 47–52; it reads SGGKDS. The [4Fe-4S] cluster site is built by Cys122, Cys125, and Cys213.

This sequence belongs to the TtcA family. Homodimer. Mg(2+) is required as a cofactor. It depends on [4Fe-4S] cluster as a cofactor.

It is found in the cytoplasm. It catalyses the reaction cytidine(32) in tRNA + S-sulfanyl-L-cysteinyl-[cysteine desulfurase] + AH2 + ATP = 2-thiocytidine(32) in tRNA + L-cysteinyl-[cysteine desulfurase] + A + AMP + diphosphate + H(+). Its pathway is tRNA modification. Catalyzes the ATP-dependent 2-thiolation of cytidine in position 32 of tRNA, to form 2-thiocytidine (s(2)C32). The sulfur atoms are provided by the cysteine/cysteine desulfurase (IscS) system. This Shewanella frigidimarina (strain NCIMB 400) protein is tRNA-cytidine(32) 2-sulfurtransferase.